Consider the following 413-residue polypeptide: Multidrug resistance protein MdtA (413 aa).

A signal peptide spans 1-32 (MNAKRIRGLLIFAAVIAIAVLIWRHFTQTSPA). A compositionally biased stretch (polar residues) spans 32-46 (AAPGTSEQHAARTSH). Residues 32-59 (AAPGTSEQHAARTSHSGNNSSGNGGGRR) are disordered.

This sequence belongs to the membrane fusion protein (MFP) (TC 8.A.1) family. Part of a tripartite efflux system composed of MdtA, MdtB and MdtC.

The protein localises to the cell inner membrane. This Pectobacterium carotovorum subsp. carotovorum (strain PC1) protein is Multidrug resistance protein MdtA.